The following is a 348-amino-acid chain: Chitinase (348 aa).

An N-terminal signal peptide occupies residues 1-29; sequence MKLKKIIPAFPLLSTVAVGLWLTPTQASA. Positions 42–348 constitute a GH18 domain; it reads KVLVGYWHNW…FATRYSNLVK (307 aa). Glu161 acts as the Proton donor in catalysis.

The protein belongs to the glycosyl hydrolase 18 family.

The protein localises to the secreted. It catalyses the reaction Random endo-hydrolysis of N-acetyl-beta-D-glucosaminide (1-&gt;4)-beta-linkages in chitin and chitodextrins.. Its pathway is glycan degradation; chitin degradation. Its function is as follows. Involved in chitin degradation. Catalyzes the cleavage of glycosidic linkages in chitooligosaccharides and in alpha- and beta-chitin. Its activity on chitooligosaccharides increases considerably with degrees of polymerization (the initial rate of hydrolysis for GlcNAc5 is about 130-fold higher than that for GlcNAc3). Its activity is greatly stimulated in the presence of the lytic chitin monooxygenase EfCBM33A, which attacks the crystalline structure of chitin and makes the polymer more accessible to the chitinase; combining the two enzymes leads to rapid and complete depolymerization of crystalline chitin, especially with beta-chitin as a substrate. Is likely involved in a chitin degradation pathway that allows E.faecalis V583 to grow on chitin as a carbon source. In Enterococcus faecalis (strain ATCC 700802 / V583), this protein is Chitinase.